The sequence spans 353 residues: Photosystem II protein D1 (353 aa).

N-acetylthreonine is present on T2. T2 carries the phosphothreonine modification. 3 consecutive transmembrane segments (helical) span residues 29–46 (YIGWFGVLMIPTLLTATS), 118–133 (HFLLGVACYMGREWEL), and 142–156 (WIAVAYSAPVAAATA). Residue H118 participates in chlorophyll a binding. Y126 contacts pheophytin a. Positions 170 and 189 each coordinate [CaMn4O5] cluster. The helical transmembrane segment at 197-218 (FHMLGVAGVFGGSLFSAMHGSL) threads the bilayer. H198 provides a ligand contact to chlorophyll a. A quinone contacts are provided by residues H215 and 264–265 (SF). A Fe cation-binding site is contributed by H215. A Fe cation-binding site is contributed by H272. Residues 274 to 288 (FLAAWPVVGIWFTAL) traverse the membrane as a helical segment. 4 residues coordinate [CaMn4O5] cluster: H332, E333, D342, and A344. Positions 345-353 (AVEVPSING) are excised as a propeptide.

Belongs to the reaction center PufL/M/PsbA/D family. PSII is composed of 1 copy each of membrane proteins PsbA, PsbB, PsbC, PsbD, PsbE, PsbF, PsbH, PsbI, PsbJ, PsbK, PsbL, PsbM, PsbT, PsbX, PsbY, PsbZ, Psb30/Ycf12, at least 3 peripheral proteins of the oxygen-evolving complex and a large number of cofactors. It forms dimeric complexes. The D1/D2 heterodimer binds P680, chlorophylls that are the primary electron donor of PSII, and subsequent electron acceptors. It shares a non-heme iron and each subunit binds pheophytin, quinone, additional chlorophylls, carotenoids and lipids. D1 provides most of the ligands for the Mn4-Ca-O5 cluster of the oxygen-evolving complex (OEC). There is also a Cl(-1) ion associated with D1 and D2, which is required for oxygen evolution. The PSII complex binds additional chlorophylls, carotenoids and specific lipids. is required as a cofactor. In terms of processing, tyr-161 forms a radical intermediate that is referred to as redox-active TyrZ, YZ or Y-Z. C-terminally processed by CTPA; processing is essential to allow assembly of the oxygen-evolving complex and thus photosynthetic growth.

The protein resides in the plastid. It localises to the chloroplast thylakoid membrane. It carries out the reaction 2 a plastoquinone + 4 hnu + 2 H2O = 2 a plastoquinol + O2. In terms of biological role, photosystem II (PSII) is a light-driven water:plastoquinone oxidoreductase that uses light energy to abstract electrons from H(2)O, generating O(2) and a proton gradient subsequently used for ATP formation. It consists of a core antenna complex that captures photons, and an electron transfer chain that converts photonic excitation into a charge separation. The D1/D2 (PsbA/PsbD) reaction center heterodimer binds P680, the primary electron donor of PSII as well as several subsequent electron acceptors. The sequence is that of Photosystem II protein D1 from Triticum aestivum (Wheat).